We begin with the raw amino-acid sequence, 341 residues long: N-acetyl-gamma-glutamyl-phosphate reductase (341 aa).

Residue C151 is part of the active site.

Belongs to the NAGSA dehydrogenase family. Type 1 subfamily.

The protein localises to the cytoplasm. The enzyme catalyses N-acetyl-L-glutamate 5-semialdehyde + phosphate + NADP(+) = N-acetyl-L-glutamyl 5-phosphate + NADPH + H(+). Its pathway is amino-acid biosynthesis; L-arginine biosynthesis; N(2)-acetyl-L-ornithine from L-glutamate: step 3/4. In terms of biological role, catalyzes the NADPH-dependent reduction of N-acetyl-5-glutamyl phosphate to yield N-acetyl-L-glutamate 5-semialdehyde. The protein is N-acetyl-gamma-glutamyl-phosphate reductase of Chlorobaculum tepidum (strain ATCC 49652 / DSM 12025 / NBRC 103806 / TLS) (Chlorobium tepidum).